Consider the following 235-residue polypeptide: MSNKLIYSGKAKDILATDDEDVIVAHYKDQATAFNGVKKEQIVGKGVLNNQISSFIFEKLNAAGVATHFIEKISDTDQLNKKVKIIPLEVVLRNYTAGSFSKRFGVEEGIALETPIVEFYYKNDDLDDPFINDEHVKFLKIANDEEIAFLKEETRRINKLLSDWFHQIGLKLIDFKLEFGFDKEGKIILADEFSPDNCRLWDAEGHHMDKDVFRRGLGELTDVYQVVWEKLQAIK.

Belongs to the SAICAR synthetase family.

It carries out the reaction 5-amino-1-(5-phospho-D-ribosyl)imidazole-4-carboxylate + L-aspartate + ATP = (2S)-2-[5-amino-1-(5-phospho-beta-D-ribosyl)imidazole-4-carboxamido]succinate + ADP + phosphate + 2 H(+). It functions in the pathway purine metabolism; IMP biosynthesis via de novo pathway; 5-amino-1-(5-phospho-D-ribosyl)imidazole-4-carboxamide from 5-amino-1-(5-phospho-D-ribosyl)imidazole-4-carboxylate: step 1/2. The sequence is that of Phosphoribosylaminoimidazole-succinocarboxamide synthase from Streptococcus gordonii (strain Challis / ATCC 35105 / BCRC 15272 / CH1 / DL1 / V288).